Reading from the N-terminus, the 386-residue chain is Phosphoglycerate kinase (386 aa).

Residues 21–23, R36, 59–62, R113, and R146 contribute to the substrate site; these read DLN and HLGR. ATP-binding positions include K197, E314, and 340 to 343; that span reads GGDT.

It belongs to the phosphoglycerate kinase family. In terms of assembly, monomer.

The protein localises to the cytoplasm. It catalyses the reaction (2R)-3-phosphoglycerate + ATP = (2R)-3-phospho-glyceroyl phosphate + ADP. Its pathway is carbohydrate degradation; glycolysis; pyruvate from D-glyceraldehyde 3-phosphate: step 2/5. This is Phosphoglycerate kinase from Marinobacter nauticus (strain ATCC 700491 / DSM 11845 / VT8) (Marinobacter aquaeolei).